The chain runs to 271 residues: tRNA (guanine-N(1)-)-methyltransferase (271 aa).

Residues Gly120 and Ile145 to Leu150 each bind S-adenosyl-L-methionine.

Belongs to the RNA methyltransferase TrmD family. In terms of assembly, homodimer.

The protein resides in the cytoplasm. The catalysed reaction is guanosine(37) in tRNA + S-adenosyl-L-methionine = N(1)-methylguanosine(37) in tRNA + S-adenosyl-L-homocysteine + H(+). In terms of biological role, specifically methylates guanosine-37 in various tRNAs. The sequence is that of tRNA (guanine-N(1)-)-methyltransferase from Bifidobacterium longum (strain NCC 2705).